The chain runs to 309 residues: Olfactory receptor 5AK2 (309 aa).

Residues 1–25 (MTLGNSTEVTEFYLLGFGAQHEFWC) are Extracellular-facing. The N-linked (GlcNAc...) asparagine glycan is linked to Asn5. A helical membrane pass occupies residues 26-46 (ILFIVFLLIYVTSIMGNSGII). Residues 47–54 (LLINTDSR) are Cytoplasmic-facing. The helical transmembrane segment at 55 to 75 (FQTLTYFFLQHLAFVDICYTS) threads the bilayer. Topologically, residues 76 to 99 (AITPKMLQSFTEEKNLMLFQGCVI) are extracellular. Cys97 and Cys189 are oxidised to a cystine. The helical transmembrane segment at 100–120 (QFLVYATFATSDCYLLAMMAV) threads the bilayer. The Cytoplasmic portion of the chain corresponds to 121–133 (DPYVAICKPLHYT). Residues 134–154 (VIMSRTVCIRLVAGSYIMGSI) traverse the membrane as a helical segment. Asn155 is a glycosylation site (N-linked (GlcNAc...) asparagine). The Extracellular segment spans residues 155–196 (NASVQTGFTCSLSFCKSNSINHFFCDVPPILALSCSNVDINI). A helical transmembrane segment spans residues 197–217 (MLLVVFVGSNLIFTGLVVIFS). The Cytoplasmic portion of the chain corresponds to 218–237 (YIYIMATILKMSSSAGRKKS). The chain crosses the membrane as a helical span at residues 238-258 (FSTCASHLTAVTIFYGTLSYM). Residues 259–271 (YLQSHSNNSQENM) are Extracellular-facing. A glycan (N-linked (GlcNAc...) asparagine) is linked at Asn265. A helical membrane pass occupies residues 272-292 (KVAFIFYGTVIPMLNPLIYSL). Residues 293 to 309 (RNKEVKEALKVIGKKLF) are Cytoplasmic-facing.

This sequence belongs to the G-protein coupled receptor 1 family.

Its subcellular location is the cell membrane. Its function is as follows. Odorant receptor. The sequence is that of Olfactory receptor 5AK2 (OR5AK2) from Homo sapiens (Human).